Reading from the N-terminus, the 168-residue chain is Small ribosomal subunit protein uS4 (168 aa).

The S4 RNA-binding domain occupies 103–167 (RRLQTIVYKK…SPFKKSIEEK (65 aa)).

It belongs to the universal ribosomal protein uS4 family. As to quaternary structure, part of the 30S ribosomal subunit. Contacts protein S5. The interaction surface between S4 and S5 is involved in control of translational fidelity.

In terms of biological role, one of the primary rRNA binding proteins, it binds directly to 16S rRNA where it nucleates assembly of the body of the 30S subunit. Its function is as follows. With S5 and S12 plays an important role in translational accuracy. In Staphylothermus marinus (strain ATCC 43588 / DSM 3639 / JCM 9404 / F1), this protein is Small ribosomal subunit protein uS4.